The sequence spans 271 residues: MSSHADSKPWTVPALAQAKRDGRKLVMLTAYDAGFARTFDANGVDLILVGDSLGMVVQGHESTLPVTTADMVYHTAAVARVLERALLVADLSFQADATPERALDAATQLLQAGAEMVKIEGAGHKLDVIRYLVEREIPVCSHLGLTPQSVLRFGGYKVQGRGEAGEQLRRDAQAAVDAGASLIVLECVPTPIAAQISAELRVPTIGIGAGPGCDGQVLVMHDMLGLDSGHRRPKFVKDFLAEGGSVAGAVQAYAQAVRDGSFPDAEHAYAA.

2 residues coordinate Mg(2+): aspartate 51 and aspartate 90. 3-methyl-2-oxobutanoate is bound by residues 51–52, aspartate 90, and lysine 118; that span reads DS. Glutamate 120 is a Mg(2+) binding site. Glutamate 186 functions as the Proton acceptor in the catalytic mechanism.

This sequence belongs to the PanB family. In terms of assembly, homodecamer; pentamer of dimers. Mg(2+) is required as a cofactor.

It localises to the cytoplasm. The enzyme catalyses 3-methyl-2-oxobutanoate + (6R)-5,10-methylene-5,6,7,8-tetrahydrofolate + H2O = 2-dehydropantoate + (6S)-5,6,7,8-tetrahydrofolate. The protein operates within cofactor biosynthesis; (R)-pantothenate biosynthesis; (R)-pantoate from 3-methyl-2-oxobutanoate: step 1/2. Functionally, catalyzes the reversible reaction in which hydroxymethyl group from 5,10-methylenetetrahydrofolate is transferred onto alpha-ketoisovalerate to form ketopantoate. The protein is 3-methyl-2-oxobutanoate hydroxymethyltransferase of Xanthomonas campestris pv. campestris (strain 8004).